The sequence spans 674 residues: Electrogenic aspartate/glutamate antiporter SLC25A13, mitochondrial (674 aa).

Residue alanine 2 is modified to N-acetylalanine. Residues alanine 2–proline 295 form a regulatory N-terminal domain region. The Mitochondrial intermembrane segment spans residues alanine 2–arginine 331. 4 consecutive EF-hand domains span residues serine 51–cysteine 86, alanine 87–histidine 122, glutamine 123–glutamate 157, and isoleucine 158–histidine 193. Ca(2+)-binding residues include aspartate 66, threonine 68, aspartate 70, leucine 72, and glutamate 77. Residues leucine 296 to glutamine 311 form a linker loop domain region. Residues valine 321 to glycine 611 form a carrier domain region. 3 Solcar repeats span residues alanine 326–lysine 418, valine 426–serine 510, and valine 518–tryptophan 605. The helical transmembrane segment at phenylalanine 332–isoleucine 349 threads the bilayer. The Mitochondrial matrix portion of the chain corresponds to aspartate 350–arginine 392. N6-acetyllysine occurs at positions 353 and 372. A helical membrane pass occupies residues glycine 393–asparagine 412. Residues aspartate 413–glycine 435 lie on the Mitochondrial intermembrane side of the membrane. A helical membrane pass occupies residues glycine 436 to leucine 449. At glutamate 450–lysine 484 the chain is on the mitochondrial matrix side. Lysine 453 bears the N6-methyllysine mark. N6-acetyllysine; alternate is present on lysine 484. Position 484 is an N6-succinyllysine; alternate (lysine 484). A helical transmembrane segment spans residues glycine 485–tyrosine 504. Residues alanine 505–leucine 523 lie on the Mitochondrial intermembrane side of the membrane. The chain crosses the membrane as a helical span at residues leucine 524 to alanine 541. Residues aspartate 542–lysine 580 lie on the Mitochondrial matrix side of the membrane. Residue lysine 580 is modified to N6-succinyllysine. The helical transmembrane segment at glycine 581–tyrosine 599 threads the bilayer. Over glutamate 600 to proline 674 the chain is Mitochondrial intermembrane. Positions glycine 612–proline 674 are C-terminal domain. The residue at position 661 (lysine 661) is an N6-acetyllysine.

This sequence belongs to the mitochondrial carrier (TC 2.A.29) family. As to quaternary structure, homodimer (via N-terminus).

It localises to the mitochondrion inner membrane. The enzyme catalyses L-aspartate(in) + L-glutamate(out) + H(+)(out) = L-aspartate(out) + L-glutamate(in) + H(+)(in). It catalyses the reaction 3-sulfino-L-alanine(out) + L-glutamate(in) + H(+)(in) = 3-sulfino-L-alanine(in) + L-glutamate(out) + H(+)(out). It carries out the reaction 3-sulfino-L-alanine(out) + L-aspartate(in) = 3-sulfino-L-alanine(in) + L-aspartate(out). Functionally, mitochondrial electrogenic aspartate/glutamate antiporter that favors efflux of aspartate and entry of glutamate and proton within the mitochondria as part of the malate-aspartate shuttle. Also mediates the uptake of L-cysteinesulfinate (3-sulfino-L-alanine) by mitochondria in exchange of L-glutamate and proton. Can also exchange L-cysteinesulfinate with aspartate in their anionic form without any proton translocation. Lacks transport activity towards gamma-aminobutyric acid (GABA). The chain is Electrogenic aspartate/glutamate antiporter SLC25A13, mitochondrial from Macaca fascicularis (Crab-eating macaque).